Here is a 485-residue protein sequence, read N- to C-terminus: Zinc finger protein 639 (485 aa).

The segment covering 1–14 has biased composition (basic residues); that stretch reads MNEYPKKRKRKTLH. Disordered regions lie at residues 1–23 and 54–80; these read MNEYPKKRKRKTLHPSRYSDSSG and DNKDDDSDPETANDLPKFADGTKARNR. Position 60 is a phosphoserine (serine 60). A Glycyl lysine isopeptide (Lys-Gly) (interchain with G-Cter in SUMO2) cross-link involves residue lysine 76. Serine 88 carries the post-translational modification Phosphoserine. A disordered region spans residues 115–136; the sequence is ASPESVHQHTQEESPIEVHTSE. Glycyl lysine isopeptide (Lys-Gly) (interchain with G-Cter in SUMO2) cross-links involve residues lysine 177, lysine 181, and lysine 226. C2H2-type zinc fingers lie at residues 204–227, 233–255, 260–283, 289–311, 374–397, 403–425, 431–454, and 460–482; these read YKCELCEFNSKYFSDLKQHVILKH, NVCRVCKESFSTNMLLIEHAKLH, YICKYCDYKTVIFENLSQHIADTH, YWCEQCDVQFSSSSELYLHFQEH, FVCQVCGFRSRLHTNVNRHVAIEH, HVCDDCGKGFSSMLEYCKHLNSH, YLCQYCEYSTGQIDDLKIHLDFKH, and HKCSECLMRFGNERDLLGHLQVH. The tract at residues 371 to 455 is interaction with CTNNA2; it reads KNFFVCQVCG…LKIHLDFKHS (85 aa).

This sequence belongs to the krueppel C2H2-type zinc-finger protein family. As to quaternary structure, interacts with CTNNA2.

The protein resides in the nucleus. Its function is as follows. Binds DNA and may function as a transcriptional repressor. The chain is Zinc finger protein 639 (Znf639) from Mus musculus (Mouse).